A 586-amino-acid chain; its full sequence is Scavenger receptor cysteine-rich domain-containing group B protein (586 aa).

A disordered region spans residues 1 to 33 (MGPSERPSIGWTPKEAEMQIGPQPDGWSRGWKP). Residues 1 to 58 (MGPSERPSIGWTPKEAEMQIGPQPDGWSRGWKPGDRGAVPLPLSPALSFLLLFPLASA) form the signal peptide. SRCR domains lie at 69–169 (LRLV…VLCD), 200–300 (VRLV…VLCA), 355–455 (LRLV…ALCA), and 484–584 (LRLA…VLCQ). Disulfide bonds link cysteine 94/cysteine 158, cysteine 107/cysteine 168, cysteine 138/cysteine 148, cysteine 225/cysteine 289, cysteine 238/cysteine 299, cysteine 269/cysteine 279, cysteine 380/cysteine 444, cysteine 393/cysteine 454, cysteine 424/cysteine 434, cysteine 509/cysteine 573, cysteine 522/cysteine 583, and cysteine 553/cysteine 563.

It is found in the secreted. This chain is Scavenger receptor cysteine-rich domain-containing group B protein, found in Mus musculus (Mouse).